The primary structure comprises 1486 residues: Collagen alpha-1(II) chain (1486 aa).

The N-terminal stretch at 1–26 is a signal peptide; it reads MFSFVDSRTLVLFAATQVILLAVVRC. A propeptide spans 27 to 183 (N-terminal propeptide); sequence QDEEDVLDTG…PPGLGGNFAA (157 aa). The VWFC domain maps to 36–94; that stretch reads GSCVQHGQRYSDKDVWKPEPCQICVCDTGTVLCDDIICEESKDCPNAEIPFGECCPICP. The segment at 100-1241 is disordered; the sequence is TSSGQGVLKG…EKGPDPMRYM (1142 aa). Composition is skewed to basic and acidic residues over residues 110–121 and 138–159; these read QKGEPGDIKDVL and SRGERGDKGEKGAPGPRGRDGE. Over residues 163-175 the composition is skewed to pro residues; the sequence is PGNPGPVGPPGPP. The span at 194–205 shows a compositional bias: low complexity; it reads GGAQMGVMQGPM. The tract at residues 203–1216 is triple-helical region; sequence GPMGPMGPRG…PGPPGPPGPP (1014 aa). Positions 210-219 are enriched in pro residues; sequence PRGPPGPTGA. Positions 220–231 are enriched in low complexity; the sequence is PGPQGFQGNPGE. Positions 233 to 242 are enriched in gly residues; that stretch reads GEPGAGGPMG. The span at 253-267 shows a compositional bias: basic and acidic residues; that stretch reads PGDDGEAGKPGKSGE. Residues 308-317 show a composition bias toward gly residues; sequence GAKGEGGATG. 4 stretches are compositionally biased toward low complexity: residues 318–330, 337–346, 363–373, and 393–421; these read EAGSPGPMGPRGL, PGSSGAAGAR, PAGAPGFPGAP, and PRGESGTPGSPGPAGASGNPGTDGIPGAK. The span at 422-431 shows a compositional bias: gly residues; it reads GSSGGPGIAG. A compositionally biased stretch (pro residues) spans 435–444; that stretch reads FPGPRGPPGP. Low complexity-rich tracts occupy residues 478–487 and 498–517; these read AGPQGAPGPA and EPGAAGPNGPPGERGAPGNR. Over residues 536 to 551 the composition is skewed to gly residues; that stretch reads GVPGLGGPKGGNGDPG. Pro-661 and Pro-670 each carry 4-hydroxyproline. Residue Pro-672 is modified to 3-hydroxyproline. A 4-hydroxyproline mark is found at Pro-673 and Pro-676. Residues 708 to 732 are compositionally biased toward low complexity; the sequence is ERGSSGPQGLQGPRGLPGTPGTDGP. Basic and acidic residues predominate over residues 766-777; that stretch reads KGDRGDTGEKGP. Positions 891–904 are enriched in low complexity; that stretch reads AQGPAGATGFPGAA. 3 positions are modified to 4-hydroxyproline: Pro-910, Pro-916, and Pro-922. The span at 913–922 shows a compositional bias: pro residues; the sequence is NGNPGPPGPP. Residues 936-955 show a composition bias toward low complexity; sequence DAGPPGRAGDPGLQGAAGAP. The span at 1007-1016 shows a compositional bias: gly residues; it reads GKQGGPGSSG. The segment covering 1102 to 1116 has biased composition (low complexity); sequence SGPAGARGLAGPQGP. The segment covering 1117–1131 has biased composition (basic and acidic residues); it reads RGDKGEAGEAGERGQ. Pro-1146 carries the post-translational modification 3-hydroxyproline. A compositionally biased stretch (low complexity) spans 1150-1159; that stretch reads AGDQGATGPA. 3-hydroxyproline is present on Pro-1188. A 4-hydroxyproline modification is found at Pro-1189. Over residues 1201-1218 the composition is skewed to pro residues; the sequence is SGPPGQPGPPGPPGPPGP. Pro-1203 bears the 3-hydroxyproline mark. Residues Pro-1204 and Pro-1207 each carry the 4-hydroxyproline modification. The residue at position 1209 (Pro-1209) is a 3-hydroxyproline. 4-hydroxyproline occurs at positions 1210 and 1213. The residue at position 1215 (Pro-1215) is a 3-hydroxyproline. A 4-hydroxyproline modification is found at Pro-1216. The tract at residues 1217–1243 is nonhelical region (C-terminal); sequence GPGIDMSAFAGLSQPEKGPDPMRYMRA. A propeptide spans 1244-1486 (C-terminal propeptide); the sequence is DQASNSLPVD…GVDIGPVCFL (243 aa). Residues 1252-1486 enclose the Fibrillar collagen NC1 domain; it reads VDVEATLKSL…GVDIGPVCFL (235 aa). 3 disulfides stabilise this stretch: Cys-1282-Cys-1314, Cys-1322-Cys-1484, and Cys-1392-Cys-1437. Asp-1300, Asn-1302, Gln-1303, Cys-1305, and Asp-1308 together coordinate Ca(2+). Asn-1387 is a glycosylation site (N-linked (GlcNAc...) asparagine).

This sequence belongs to the fibrillar collagen family. Homotrimers of alpha 1(II) chains. Contains mostly 4-hydroxyproline. Prolines at the third position of the tripeptide repeating unit (G-X-P) are 4-hydroxylated in some or all of the chains. Post-translationally, contains 3-hydroxyproline at a few sites. This modification occurs on the first proline residue in the sequence motif Gly-Pro-Hyp, where Hyp is 4-hydroxyproline. In terms of processing, lysine residues at the third position of the tripeptide repeating unit (G-X-Y) are 5-hydroxylated in some or all of the chains. O-glycosylated on hydroxylated lysine residues. The O-linked glycan consists of a Glc-Gal disaccharide.

It localises to the secreted. The protein resides in the extracellular space. Its subcellular location is the extracellular matrix. Functionally, type II collagen is specific for cartilaginous tissues. It is essential for the normal embryonic development of the skeleton, for linear growth and for the ability of cartilage to resist compressive forces. In Xenopus laevis (African clawed frog), this protein is Collagen alpha-1(II) chain.